The chain runs to 279 residues: Putative cysteine-rich repeat secretory protein 22 (279 aa).

The signal sequence occupies residues 1 to 31 (MSSSSASKLLGSVLVFAMISVQIVFIHCVMS). Gnk2-homologous domains are found at residues 44 to 146 (YLHH…PINS) and 152 to 276 (YEYN…LYRF).

The protein belongs to the cysteine-rich repeat secretory protein family.

The protein resides in the secreted. The protein is Putative cysteine-rich repeat secretory protein 22 (CRRSP22) of Arabidopsis thaliana (Mouse-ear cress).